Here is a 154-residue protein sequence, read N- to C-terminus: Large-conductance mechanosensitive channel (154 aa).

2 consecutive transmembrane segments (helical) span residues 14–34 and 86–106; these read VVDLAVGIVIGAAFGAIVNSL and VFINALINFLILAMAIFFFVV.

Belongs to the MscL family. In terms of assembly, homopentamer.

The protein localises to the cell membrane. Functionally, channel that opens in response to stretch forces in the membrane lipid bilayer. May participate in the regulation of osmotic pressure changes within the cell. This Dehalococcoides mccartyi (strain ATCC BAA-2100 / JCM 16839 / KCTC 5957 / BAV1) protein is Large-conductance mechanosensitive channel.